The primary structure comprises 167 residues: GTP-dependent dephospho-CoA kinase (167 aa).

Residues D39, V41, D58, K60, and E117 each contribute to the GTP site.

The protein belongs to the GTP-dependent DPCK family.

The enzyme catalyses 3'-dephospho-CoA + GTP = GDP + CoA + H(+). It participates in cofactor biosynthesis; coenzyme A biosynthesis. Functionally, catalyzes the GTP-dependent phosphorylation of the 3'-hydroxyl group of dephosphocoenzyme A to form coenzyme A (CoA). The chain is GTP-dependent dephospho-CoA kinase from Korarchaeum cryptofilum (strain OPF8).